Consider the following 1167-residue polypeptide: Melanoma receptor tyrosine-protein kinase (1167 aa).

A signal peptide spans 1 to 25; it reads MEFLRGGAALLQLLLVLSISRCCST. Residues 26 to 642 are Extracellular-facing; sequence DPDRKVCQGT…GCRGDIVSHS (617 aa). 3 N-linked (GlcNAc...) asparagine glycosylation sites follow: N114, N144, and N201. 11 disulfides stabilise this stretch: C195/C204, C199/C212, C220/C228, C224/C236, C237/C245, C241/C253, C256/C265, C269/C296, C300/C311, C315/C330, and C333/C337. Residues N356, N365, N398, N417, and N501 are each glycosylated (N-linked (GlcNAc...) asparagine). 9 cysteine pairs are disulfide-bonded: C504/C513, C508/C521, C524/C533, C537/C553, C556/C569, C560/C577, C593/C615, C618/C626, and C622/C634. An N-linked (GlcNAc...) asparagine glycan is attached at N576. N621 carries an N-linked (GlcNAc...) asparagine glycan. A helical membrane pass occupies residues 643–665; the sequence is SLAVGLVSGLLITVIVALLIVVL. Residues 666 to 1167 lie on the Cytoplasmic side of the membrane; it reads LRRRRIKRKR…QGGALYTPVR (502 aa). Positions 710 to 977 constitute a Protein kinase domain; it reads FKKDRVLGSG…QMARDPSRYL (268 aa). ATP contacts are provided by residues 716 to 724 and K743; that span reads LGSGAFGTV. Catalysis depends on D835, which acts as the Proton acceptor.

Belongs to the protein kinase superfamily. Tyr protein kinase family. EGF receptor subfamily.

The protein localises to the membrane. The catalysed reaction is L-tyrosyl-[protein] + ATP = O-phospho-L-tyrosyl-[protein] + ADP + H(+). Functionally, probable receptor with tyrosine-protein kinase activity. This Xiphophorus maculatus (Southern platyfish) protein is Melanoma receptor tyrosine-protein kinase (xmrk).